The primary structure comprises 1093 residues: Receptor-mediated endocytosis protein 6 (1093 aa).

A Ras-GAP domain is found at 156–389; it reads LKIAQVVCNL…EMMDALLVEK (234 aa). Disordered regions lie at residues 547–610 and 643–669; these read DLEK…GGEQ and RSGS…DVAT. Composition is skewed to polar residues over residues 568-577 and 584-598; these read IDFSSGSAET and DSTS…STEE. Residues 955 to 1093 form the VPS9 domain; the sequence is HHRDKLLRGT…SAVEYIKTIL (139 aa).

It belongs to the GAPVD1 family. As to quaternary structure, interacts with GDP-bound rab-5. Interacts with alpha-adaptin.

It is found in the membrane. Its subcellular location is the cytoplasmic vesicle. It localises to the clathrin-coated vesicle. In terms of biological role, acts both as a GTPase-activating protein (GAP) and a guanine nucleotide exchange factor (GEF), and participates in endocytosis. Acts by regulating the activation of rab-5 by exchanging bound GDP for free GTP at clathrin coated pits. This is Receptor-mediated endocytosis protein 6 (rme-6) from Caenorhabditis elegans.